Consider the following 254-residue polypeptide: CDP-diacylglycerol pyrophosphatase (254 aa).

The chain crosses the membrane as a helical span at residues 6–26 (YFLLALLVAILAALAGGYYWL).

Belongs to the Cdh family.

The protein resides in the cell inner membrane. The enzyme catalyses a CDP-1,2-diacyl-sn-glycerol + H2O = a 1,2-diacyl-sn-glycero-3-phosphate + CMP + 2 H(+). It functions in the pathway phospholipid metabolism; CDP-diacylglycerol degradation; phosphatidate from CDP-diacylglycerol: step 1/1. The polypeptide is CDP-diacylglycerol pyrophosphatase (Klebsiella pneumoniae (strain 342)).